Here is a 97-residue protein sequence, read N- to C-terminus: MSRRCELTAKGPQVGHKVSHSNIKSKRRFLPNLCNVTLMSETLGQSVRLRVSTNALKSVDHNGGLDAFLLKANIANLSPKAADLKRQIEKKKLAAAS.

A disordered region spans residues 1–20; it reads MSRRCELTAKGPQVGHKVSH.

This sequence belongs to the bacterial ribosomal protein bL28 family.

This chain is Large ribosomal subunit protein bL28, found in Afipia carboxidovorans (strain ATCC 49405 / DSM 1227 / KCTC 32145 / OM5) (Oligotropha carboxidovorans).